The primary structure comprises 423 residues: Glutamate-1-semialdehyde 2,1-aminomutase (423 aa).

The residue at position 258 (K258) is an N6-(pyridoxal phosphate)lysine.

The protein belongs to the class-III pyridoxal-phosphate-dependent aminotransferase family. HemL subfamily. Requires pyridoxal 5'-phosphate as cofactor.

Its subcellular location is the cytoplasm. The enzyme catalyses (S)-4-amino-5-oxopentanoate = 5-aminolevulinate. The protein operates within porphyrin-containing compound metabolism; protoporphyrin-IX biosynthesis; 5-aminolevulinate from L-glutamyl-tRNA(Glu): step 2/2. The chain is Glutamate-1-semialdehyde 2,1-aminomutase from Pyrobaculum arsenaticum (strain DSM 13514 / JCM 11321 / PZ6).